Reading from the N-terminus, the 248-residue chain is Probable transcriptional regulatory protein RHOS4_22610 (248 aa).

The disordered stretch occupies residues 1–21 (MAGHSKWANIQHRKGKQDKLR).

The protein belongs to the TACO1 family.

Its subcellular location is the cytoplasm. The protein is Probable transcriptional regulatory protein RHOS4_22610 of Cereibacter sphaeroides (strain ATCC 17023 / DSM 158 / JCM 6121 / CCUG 31486 / LMG 2827 / NBRC 12203 / NCIMB 8253 / ATH 2.4.1.) (Rhodobacter sphaeroides).